The chain runs to 268 residues: MKPPRSRSGSSKDTGPKRIPGKALKSASNPGENDATLDSATARTARNKTVSLRTARGRTTAQQRWLNRQLNDPYVAAARKQGWRSRAAFKLIEIDDRFKLIGEGTRIIDLGAAPGGWTQVAVKRGAKHVVGLDLLPVDPVAGAEIIEGDFTDPEMPDRLKDMLGGPADLVMSDMAPNTTGHAATDHMRIMGLAEGALDFAFQVLAEGGSFIAKVFQGGSEKDMLALMKTAFSSVKHVKPPASRKESSELYVIATGFRPERLLESSKGA.

The tract at residues 1–60 (MKPPRSRSGSSKDTGPKRIPGKALKSASNPGENDATLDSATARTARNKTVSLRTARGRTT) is disordered. The span at 26–52 (SASNPGENDATLDSATARTARNKTVSL) shows a compositional bias: polar residues. S-adenosyl-L-methionine-binding residues include glycine 115, tryptophan 117, aspartate 133, aspartate 149, and aspartate 173. Lysine 213 (proton acceptor) is an active-site residue.

The protein belongs to the class I-like SAM-binding methyltransferase superfamily. RNA methyltransferase RlmE family.

The protein localises to the cytoplasm. It catalyses the reaction uridine(2552) in 23S rRNA + S-adenosyl-L-methionine = 2'-O-methyluridine(2552) in 23S rRNA + S-adenosyl-L-homocysteine + H(+). In terms of biological role, specifically methylates the uridine in position 2552 of 23S rRNA at the 2'-O position of the ribose in the fully assembled 50S ribosomal subunit. The polypeptide is Ribosomal RNA large subunit methyltransferase E (Gluconobacter oxydans (strain 621H) (Gluconobacter suboxydans)).